A 487-amino-acid chain; its full sequence is WRKY transcription factor 1 (487 aa).

The disordered stretch occupies residues Q69–F104. Position 76 is a phosphoserine (S76). Polar residues predominate over residues S86–N101. The WRKY 1 DNA-binding region spans I105 to P169. The Zn(2+) site is built by C136, C141, H164, and H166. Positions S255–E287 are disordered. The Nuclear localization signal signature appears at K273–K277. The segment at residues T301 to P366 is a DNA-binding region (WRKY 2). C332, C337, H361, and H363 together coordinate Zn(2+). The tract at residues E380–S487 is disordered. The span at K390–T401 shows a compositional bias: polar residues. Basic and acidic residues-rich tracts occupy residues L429–T462 and E476–S487.

The protein belongs to the WRKY group I family. As to expression, expressed to similar levels in root and flower, to a somewhat lower level in stem and to low levels in leaf and siliques.

It is found in the nucleus. In terms of biological role, transcription factor. Binds to a 5'-CGTTGACCGAG-3' consensus core sequence which contains a W box, a frequently occurring elicitor-responsive cis-acting element. This is WRKY transcription factor 1 from Arabidopsis thaliana (Mouse-ear cress).